The sequence spans 295 residues: Trimeric intracellular cation channel type A (295 aa).

The Lumenal portion of the chain corresponds to 1–11 (MELLSALSLDD). Residues 12–32 (LAVAFSKLPVFPLFDVAYYII) form a helical membrane-spanning segment. Topologically, residues 33 to 51 (SILYLKYEPGAVDLSKRSP) are cytoplasmic. A helical transmembrane segment spans residues 52-72 (VASWLCAMLYCFGSYILADVL). Residues 73–84 (LGESPIHYFSNN) lie on the Lumenal side of the membrane. Ca(2+) is bound at residue Gly74. A helical transmembrane segment spans residues 85-105 (ANILLASAVWYLTFFCPLNIF). Residues 106–144 (YKIVSFLPLKLVLVGMKEVVRVRKIAMGIHHAHHHYHHG) lie on the Cytoplasmic side of the membrane. A 1,2-diacyl-sn-glycero-3-phospho-(1D-myo-inositol-4,5-bisphosphate) is bound by residues Lys122 and Arg126. The chain crosses the membrane as a helical span at residues 145-165 (WVIMVLIGWVKGSGVALMSNL). At 166–178 (EQLLRGVWKPETN) the chain is on the lumenal side. Residues 179–199 (EILHMSFPTKASLYGAILFTL) traverse the membrane as a helical segment. Residues 200 to 201 (QQ) lie on the Cytoplasmic side of the membrane. The chain crosses the membrane as a helical span at residues 202 to 222 (AHWLPISKAYLIFFFTLFMAI). Over 223 to 233 (CKIYMTATHSH) the chain is Lumenal. Residues 234–254 (GSPFAIFESGICCVLFGAANG) traverse the membrane as a helical segment. Residues 255 to 295 (DHDDHGDHHHHHDDHDVSHSTVKSKEELNEGTRKRKTKKAE) lie on the Cytoplasmic side of the membrane. Residues 259–286 (HGDHHHHHDDHDVSHSTVKSKEELNEGT) show a composition bias toward basic and acidic residues. Positions 259–295 (HGDHHHHHDDHDVSHSTVKSKEELNEGTRKRKTKKAE) are disordered.

This sequence belongs to the TMEM38 family. In terms of assembly, homotrimer; conformation seems to be controled by binding to diacylglycerol (DAG).

Its subcellular location is the sarcoplasmic reticulum membrane. It is found in the nucleus membrane. It catalyses the reaction K(+)(in) = K(+)(out). Channel activity is activated by a change of voltage within the sarcoplasmic reticulum lumen and blocked by luminal high Ca(2+) levels. Its function is as follows. Intracellular monovalent cation channel required for maintenance of rapid intracellular calcium release. Acts as a potassium counter-ion channel that functions in synchronization with calcium release from intracellular stores. Opened by a change of voltage within the sarcoplasmic reticulum lumen. This Xenopus tropicalis (Western clawed frog) protein is Trimeric intracellular cation channel type A (tmem38a).